An 86-amino-acid chain; its full sequence is SEED MATURATION PROTEIN 1 (86 aa).

Residues 52 to 86 form a disordered region; it reads RIEKGKEQSAASGDQTQIQRDIKDIKGTRTDDSPR. Residues 60–70 show a composition bias toward polar residues; sequence SAASGDQTQIQ. The span at 71 to 86 shows a compositional bias: basic and acidic residues; it reads RDIKDIKGTRTDDSPR.

This sequence belongs to the LEA type 3 family.

In terms of biological role, protein chaperone involved in seed maturation and dormancy maintenance after high temperature fluctuation (e.g. secondary dormancy after 3 days at 40 degrees Celsius), probably by protecting heat labile proteins required for secondary dormancy (e.g. G6PDH, HOP3, SR45, ECP63, SCL33, RPL32B, ChlADR1, MSBP1, MBF1B, At3g01690, At1g15280, At1g15290, At2g31410, At1g11630, At1g65090, EMB2279, EMB1674 and RPL35C). This is SEED MATURATION PROTEIN 1 from Arabidopsis thaliana (Mouse-ear cress).